A 379-amino-acid chain; its full sequence is S-adenosylmethionine:tRNA ribosyltransferase-isomerase (379 aa).

Residues Ala-35–Ser-58 are disordered.

This sequence belongs to the QueA family. As to quaternary structure, monomer.

The protein localises to the cytoplasm. The catalysed reaction is 7-aminomethyl-7-carbaguanosine(34) in tRNA + S-adenosyl-L-methionine = epoxyqueuosine(34) in tRNA + adenine + L-methionine + 2 H(+). It functions in the pathway tRNA modification; tRNA-queuosine biosynthesis. Its function is as follows. Transfers and isomerizes the ribose moiety from AdoMet to the 7-aminomethyl group of 7-deazaguanine (preQ1-tRNA) to give epoxyqueuosine (oQ-tRNA). The polypeptide is S-adenosylmethionine:tRNA ribosyltransferase-isomerase (Rhizobium leguminosarum bv. trifolii (strain WSM2304)).